A 319-amino-acid polypeptide reads, in one-letter code: Cytochrome c biogenesis protein CcsA (319 aa).

The next 7 helical transmembrane spans lie at isoleucine 9–leucine 29, glycine 44–glycine 64, leucine 71–leucine 91, methionine 143–isoleucine 163, isoleucine 225–asparagine 245, threonine 259–histidine 273, and alanine 286–leucine 306.

It belongs to the CcmF/CycK/Ccl1/NrfE/CcsA family. May interact with Ccs1.

It is found in the plastid. The protein localises to the chloroplast thylakoid membrane. Functionally, required during biogenesis of c-type cytochromes (cytochrome c6 and cytochrome f) at the step of heme attachment. The chain is Cytochrome c biogenesis protein CcsA from Oenothera argillicola (Appalachian evening primrose).